Here is a 333-residue protein sequence, read N- to C-terminus: Calcium uniporter protein, mitochondrial (333 aa).

A mitochondrion-targeting transit peptide spans 1 to 22 (MRNGRCLVTPFVTAQRLANLRN). At 23–214 (TLWNRQQIAF…QECEAHTDRV (192 aa)) the chain is on the mitochondrial matrix side. Residues 180-193 (KKLLLQLENAETLL) adopt a coiled-coil conformation. The segment at 195 to 213 (PLHDAKRKIEQECEAHTDR) is outer juxtamembrane helix (OJMH). A helical membrane pass occupies residues 215-234 (MWAGFAAMGVQTGLFARLTW). Residues 235–243 (WEYSWDIME) are Mitochondrial intermembrane-facing. A Selectivity filter motif is present at residues 239 to 247 (WDIMEPVTY). Residue glutamate 243 participates in Ca(2+) binding. The helical transmembrane segment at 244 to 260 (PVTYFATYSTVCATFGY) threads the bilayer. Over 261 to 333 (YLYTQQSFEY…SYLSNLEAEK (73 aa)) the chain is Mitochondrial matrix. The tract at residues 262-271 (LYTQQSFEYP) is inner juxtamembrane helix (IJMH). Residues 289–316 (QNFDIEKYNRLVTEVDELRNQLKRMRDP) are a coiled coil.

The protein belongs to the MCU (TC 1.A.77) family.

Its subcellular location is the mitochondrion inner membrane. It carries out the reaction Ca(2+)(in) = Ca(2+)(out). Its activity is regulated as follows. Inhibited by ruthenium red or its derivative Ru360; possibly by obstructing the pore. Its function is as follows. Mitochondrial inner membrane calcium uniporter that mediates calcium uptake into mitochondria. Constitutes a pore-forming and calcium-conducting subunit. Mitochondrial calcium homeostasis plays key roles in cellular physiology and regulates cell bioenergetics, cytoplasmic calcium signals and activation of cell death pathways. Required for rapid mitochondrial calcium uptake and mitochondrial reactive oxygen species (mtROS) production after wounding. In addition, together with mitochondrial calcium regulator micu-1, required for mitochondrial calcium uptake following axon injury in PLM touch receptor neurons. The sequence is that of Calcium uniporter protein, mitochondrial from Caenorhabditis elegans.